Here is a 726-residue protein sequence, read N- to C-terminus: Type VI secretion system spike protein VgrG1c (726 aa).

The segment at 502-522 (ANATQSGTKSRSSKGGTPANF) is disordered. A compositionally biased stretch (low complexity) spans 507–518 (SGTKSRSSKGGT).

Belongs to the VgrG protein family. Forms homomultimers. Part of the type VI secretion system (T6SS).

It localises to the secreted. Functionally, part of the H1 type VI secretion system (H1-T6SS) specialized secretion system, which delivers several virulence factors in both prokaryotic and eukaryotic cells during infection. Allows the delivery of the Tse5/RhsP1 toxin to target cells where it exerts its toxicity. This Pseudomonas aeruginosa (strain ATCC 15692 / DSM 22644 / CIP 104116 / JCM 14847 / LMG 12228 / 1C / PRS 101 / PAO1) protein is Type VI secretion system spike protein VgrG1c.